The sequence spans 1014 residues: Nebulette (1014 aa).

A disordered region spans residues 1-24 (MRVPVFEDIKDETEEEKIGEEENE). Residues 9–24 (IKDETEEEKIGEEENE) show a composition bias toward acidic residues. Nebulin repeat units follow at residues 29 to 63 (FYKPVIEDLSMELARKCTELISDIRYKEEFKKSKD), 64 to 99 (KCTFVTDSPMLNHVKNIGAFISEAKYKGTIKADLSN), 100 to 136 (SLYKRMPATIDSVFAGEVTQLQSEVAYKQKHDAAKGF), 137 to 172 (SDYAHMKEPPEVKHAMEVNKHQSNISYRKDVQDTHT), 173 to 205 (YSAELDRPDIKMATQISKIISNAEYKKGQGIMN), 206 to 241 (KEPAVIGRPDFEHAVEASKLSSQIKYKEKFDNEMKD), 242 to 278 (KKHHYNPLESASFRQNQLAATLASNVKYKKDIQNMHD), 279 to 313 (PVSDLPNLLFLDHVLKASKMLSGREYKKLFEENKG), 314 to 348 (MYHFDADAVEHLHHKGNAVLQSQVKYKEEYEKNKG), 349 to 385 (KPMLEFVETPSYQASKEAQKMQSEKVYKEDFEKEIKG), 386 to 422 (RSSLDLDKTPEFLHVKYITNLLREKEYKKDLENEIKG), 423 to 459 (KGMELNSEVLDIQRAKRASEMASEKEYKKDLESIIKG), 460 to 496 (KGMQAGTDTLEMQHAKKAAEIASEKDYKRDLETEIKG), 497 to 533 (KGMQVSTDTLDVQRAKKASEMASQKQYKKDLENEIKG), 534 to 569 (KGMQVSMDIPDILRAKRTSEIYSQRKYKDEAEKMLS), 570 to 599 (NYSTIADTPEIQRIKTTQQNISAVFYKKEV), 600 to 635 (GAGTAVKDSPEIERVKKNQQNISSVKYKEEIKHATA), 636 to 666 (ISDPPELKRVKENQKNISNLQYKEQNYKATP), 667 to 693 (VSMTPEIERVRRNQEQLSAVKYKGELQ), 694 to 728 (RGTAISDPPELKRAKENQKNISNVYYRGQLGRATT), 729 to 759 (LSVTPEMERVKKNQENISSVKYTQDHKQMKG), 760 to 794 (RPSLILDTPAMRHVKEAQNHISMVKYHEDFEKTKG), and 795 to 830 (RGFTPVVDDPVTERVRKNTQVVSDAAYKGVHPHIVE). The residue at position 96 (D96) is an Omega-N-methylarginine. R795 is modified (omega-N-methylarginine). A linker region spans residues 836-953 (GIIVDLKVWR…VSSMRSMQHS (118 aa)). In terms of domain architecture, SH3 spans 954 to 1014 (PNLRTYRAMY…LPANYIEFVN (61 aa)).

As to quaternary structure, interacts (via nebulin repeats 1-5) with DESM (via rod region). Interacts (via SH3 domain) with XIRP2. Interacts with ZYX/Zyxin. As to expression, abundantly expressed in cardiac muscle, but not in skeletal or smooth muscle. Localized to Z-lines in cardiac cells and to dense bodies in nonmuscle cells. Isoform 2 is expressed in non-muscle cells such as in fibroblasts.

Its subcellular location is the cytoplasm. Its function is as follows. Binds to actin and plays an important role in the assembly of the Z-disk. May functionally link sarcomeric actin to the desmin intermediate filaments in the heart muscle sarcomeres. May play a role in the assembly of focal adhesions. This chain is Nebulette, found in Homo sapiens (Human).